The following is a 92-amino-acid chain: 11 kDa excretory-secretory protein (92 aa).

This Trichostrongylus colubriformis (Black scour worm) protein is 11 kDa excretory-secretory protein.